A 1072-amino-acid polypeptide reads, in one-letter code: Translation initiation factor IF-2 (1072 aa).

2 disordered regions span residues 55–369 and 426–452; these read ILDK…TGTA and ELVD…VSKQ. 4 stretches are compositionally biased toward low complexity: residues 91 to 100, 108 to 118, 126 to 179, and 186 to 212; these read AEASQAAEPA, EPATFAAEEPV, APRA…AEVA, and EAPQ…PSVQ. Residues 218–230 show a composition bias toward pro residues; it reads PQPPPRSPVPPAV. Positions 231–245 are enriched in low complexity; sequence RTPSSTSSSATVVSR. A compositionally biased stretch (gly residues) spans 253–307; that stretch reads QRGGPGGGRPGGPGGPGGRPGGPGGPGGRPGGPGGPGGRPGGPGGPGGRPGGPGG. Positions 426–436 are enriched in basic and acidic residues; it reads ELVDVSKNKER. The tr-type G domain occupies 570–737; the sequence is PRPPVVAIMG…NLALQAEVLE (168 aa). Positions 579-586 are G1; it reads GHVDHGKT. 579–586 serves as a coordination point for GTP; the sequence is GHVDHGKT. Residues 604-608 are G2; it reads GITQH. Residues 625–628 are G3; it reads DTPG. GTP is bound by residues 625–629 and 679–682; these read DTPGH and NKMD. The tract at residues 679 to 682 is G4; it reads NKMD. The tract at residues 715 to 717 is G5; sequence SAK.

It belongs to the TRAFAC class translation factor GTPase superfamily. Classic translation factor GTPase family. IF-2 subfamily.

The protein localises to the cytoplasm. Functionally, one of the essential components for the initiation of protein synthesis. Protects formylmethionyl-tRNA from spontaneous hydrolysis and promotes its binding to the 30S ribosomal subunits. Also involved in the hydrolysis of GTP during the formation of the 70S ribosomal complex. The polypeptide is Translation initiation factor IF-2 (Myxococcus xanthus (strain DK1622)).